We begin with the raw amino-acid sequence, 573 residues long: Putative ATP-dependent RNA helicase R563 (573 aa).

Positions Ile-57–Asn-233 constitute a Helicase ATP-binding domain. His-70–Thr-77 is an ATP binding site. Residues Asp-179–His-182 carry the DEAH box motif. In terms of domain architecture, Helicase C-terminal spans Lys-374–Ala-551.

The protein belongs to the DEAD box helicase family. DEAH subfamily.

It localises to the virion. It catalyses the reaction ATP + H2O = ADP + phosphate + H(+). This is Putative ATP-dependent RNA helicase R563 from Acanthamoeba polyphaga mimivirus (APMV).